We begin with the raw amino-acid sequence, 112 residues long: Integration host factor subunit alpha (112 aa).

This sequence belongs to the bacterial histone-like protein family. Heterodimer of an alpha and a beta chain.

This protein is one of the two subunits of integration host factor, a specific DNA-binding protein that functions in genetic recombination as well as in transcriptional and translational control. The sequence is that of Integration host factor subunit alpha from Sinorhizobium medicae (strain WSM419) (Ensifer medicae).